Consider the following 391-residue polypeptide: Ectodysplasin-A (391 aa).

The segment covering 1–21 (MGYPEVERREPLPAAAPRERG) has biased composition (basic and acidic residues). The tract at residues 1–28 (MGYPEVERREPLPAAAPRERGSQGCGCR) is disordered. The Cytoplasmic segment spans residues 1-41 (MGYPEVERREPLPAAAPRERGSQGCGCRGAPARAGEGNSCR). Residues 42-62 (LFLGFFGLSLALHLLTLCCYL) traverse the membrane as a helical; Signal-anchor for type II membrane protein segment. The Extracellular portion of the chain corresponds to 63-391 (ELRSELRRER…AIRLGEAPAS (329 aa)). 2 disordered regions span residues 73–130 (GAES…SQDG) and 145–245 (SYSE…GTRE). Residues 76-96 (SRFSGPGTPGTSGTLSSPGGL) are compositionally biased toward low complexity. The Collagen-like domain occupies 180 to 229 (GPPGPNGPPGPPGPPGPQGPPGIPGIPGIPGTTVMGPPGPPGPPGPQGPP). 2 stretches are compositionally biased toward pro residues: residues 181 to 203 (PPGPNGPPGPPGPPGPQGPPGIP) and 216 to 228 (PPGPPGPPGPQGP). Positions 249–385 (AVVHLQGQGS…HTTFFGAIRL (137 aa)) constitute a THD domain. Asparagine 313 carries an N-linked (GlcNAc...) asparagine glycan. An intrachain disulfide couples cysteine 332 to cysteine 346. Asparagine 372 is a glycosylation site (N-linked (GlcNAc...) asparagine).

The protein belongs to the tumor necrosis factor family. In terms of assembly, homotrimer. The homotrimers may then dimerize and form higher-order oligomers. Post-translationally, N-glycosylated. Processing by furin produces a secreted form.

It is found in the cell membrane. It localises to the secreted. In terms of biological role, cytokine which is involved in epithelial-mesenchymal signaling during morphogenesis of ectodermal organs. Functions as a ligand activating the DEATH-domain containing receptors EDAR and EDA2R. Isoform A1 binds only to the receptor EDAR, while isoform A2 binds exclusively to the receptor EDA2R. May also play a role in cell adhesion. Its function is as follows. Isoform A1 binds only to the receptor EDAR, while isoform A2 binds exclusively to the receptor EDA2R. Isoform A2 binds exclusively to the receptor EDA2R. The sequence is that of Ectodysplasin-A (EDA) from Bos taurus (Bovine).